We begin with the raw amino-acid sequence, 889 residues long: MIFFFKKRYHVFLKAPSIRLMPCSFFFFRSFIKVIFIIRCIFFSSLSGDSCPTQRSRSTLACMFTSVPVAPTVVPGVVYSSGVHEEWKEAEQKLLDGCLIHSEGDGATKQIKEKLTSRNSQSVRCDLCAKMIESRDEEQIQEHFQVHHAALSLWCREILASKDNLLHYGCIPSGHIVSCGNFVLESAATLDMGRKTFDVIERAFSQMSQVISCFVRNLVLFPFGSCVSCGCWDGVSDADFTAIGLQDMKKGKWPPEDEKKVILRLTAALRKAGFFFGELEPLVRTRVPVVRRVQKVRVPLRSHGEHDTYSVVWSNSKEFSSPPRMLVEAAISSTVERKDSDTVTFHFKDSLKAVKFFCNSAMCGPRDMEVSWKTGSQLPEMFSLDFDLSCRAQGVRNSLFLRKYFQQDPFVRTGYLFLKKWSKLYGINNAKNGYLTSYAMSILWVHFLLENGLVKFVRPADVEPIPDLSQQKMSYLPLLRDDGDGGERPSDVLKSPELTMLRGALGGLIPLFFLYYTRIRWDKVVVTLRVPGGGPPVTPDSLGWVEANEVKCGPLRDRVWYRLCIDDPYEDNFNLGRHLSPDKASFVKVQFMRALASIVAGRPQQLLVDEQKFAEETMPAYVTRLSVQGELRNLRPVTVSALRQLLIDSAGADCVAIYEASHNWETLLDMASTLNNKSKEGDDDAEGVTNNQEGEPPDHVESCEAPRRHLLCSKMHSIDDALLVAGPLGVSDANIPAGLLGVYFLARGRAFRTAEDRDNFLMHAEAVSAARARGCTTREEILERVADAIPSIVRNGTLLDDLLVSGSEENITVQSPVVVETRCAETVQRKKSKGSKKRKNAVRRGNHAGQGTCSECGASGTDLWEASDKSADDGLYCGACWKAYNCQKN.

Residues Val123–Leu151 form a C2H2-type; atypical zinc finger. Positions 125, 128, 143, and 148 each coordinate Zn(2+). Residues Ser225 and Ser236–Asp239 each bind UTP. Residues Asp237 and Asp239 each coordinate Mg(2+). Residue Arg286 participates in RNA binding. Residues Gly394–Ser398, Lys419, Lys423, and Ser437–Tyr438 contribute to the UTP site. Positions Leu505–Asn572 constitute a PAP-associated domain. Positions Ile565–Asn574 match the Nucleotide recognition motif (NRM) motif. 2 disordered regions span residues Asn675 to Ser702 and Arg829 to Gly849. Over residues Arg829 to Asn846 the composition is skewed to basic residues.

It belongs to the DNA polymerase type-B-like family. The cofactor is Mg(2+). Mn(2+) is required as a cofactor.

Its subcellular location is the cytoplasm. The catalysed reaction is RNA(n) + UTP = RNA(n)-3'-uridine ribonucleotide + diphosphate. In terms of biological role, terminal uridylyltransferase which catalyzes the addition of Us to the 3'-hydroxyl group of single-stranded RNAs. Does not mediate RNA-independent UTP polymerization. This chain is Terminal uridylyltransferase 3, found in Trypanosoma brucei brucei.